An 877-amino-acid polypeptide reads, in one-letter code: Phosphoenolpyruvate carboxylase (877 aa).

Catalysis depends on residues His-138 and Lys-544.

Belongs to the PEPCase type 1 family. Mg(2+) serves as cofactor.

It carries out the reaction oxaloacetate + phosphate = phosphoenolpyruvate + hydrogencarbonate. In terms of biological role, forms oxaloacetate, a four-carbon dicarboxylic acid source for the tricarboxylic acid cycle. This is Phosphoenolpyruvate carboxylase from Vibrio vulnificus (strain YJ016).